The primary structure comprises 92 residues: UPF0473 protein BC_4380 (92 aa).

The protein belongs to the UPF0473 family.

The protein is UPF0473 protein BC_4380 of Bacillus cereus (strain ATCC 14579 / DSM 31 / CCUG 7414 / JCM 2152 / NBRC 15305 / NCIMB 9373 / NCTC 2599 / NRRL B-3711).